Reading from the N-terminus, the 386-residue chain is Chaperone protein DnaJ (386 aa).

Residues 4-68 (NFYDVLGVSR…QKRQQYDQLG (65 aa)) form the J domain. Composition is skewed to basic and acidic residues over residues 22–35 (KAYR…HPDV) and 43–79 (ERFK…DKRG). Residues 22 to 132 (KAYRKQAAEH…GGNRPRQGQD (111 aa)) form a disordered region. Composition is skewed to gly residues over residues 80 to 104 (ATGG…GAGG) and 113 to 125 (FGGG…GGGN). The segment at 147–229 (GATKEVTLTR…CGGDGVVREE (83 aa)) adopts a CR-type zinc-finger fold. 8 residues coordinate Zn(2+): C160, C163, C177, C180, C203, C206, C217, and C220. 4 CXXCXGXG motif repeats span residues 160–167 (CDTCDGAG), 177–184 (CSQCNGRG), 203–210 (CPRCEGSG), and 217–224 (CADCGGDG).

Belongs to the DnaJ family. As to quaternary structure, homodimer. Requires Zn(2+) as cofactor.

It localises to the cytoplasm. Participates actively in the response to hyperosmotic and heat shock by preventing the aggregation of stress-denatured proteins and by disaggregating proteins, also in an autonomous, DnaK-independent fashion. Unfolded proteins bind initially to DnaJ; upon interaction with the DnaJ-bound protein, DnaK hydrolyzes its bound ATP, resulting in the formation of a stable complex. GrpE releases ADP from DnaK; ATP binding to DnaK triggers the release of the substrate protein, thus completing the reaction cycle. Several rounds of ATP-dependent interactions between DnaJ, DnaK and GrpE are required for fully efficient folding. Also involved, together with DnaK and GrpE, in the DNA replication of plasmids through activation of initiation proteins. In Halorubrum lacusprofundi (strain ATCC 49239 / DSM 5036 / JCM 8891 / ACAM 34), this protein is Chaperone protein DnaJ.